Reading from the N-terminus, the 310-residue chain is Methionyl-tRNA formyltransferase (310 aa).

109 to 112 (SLLP) is a binding site for (6S)-5,6,7,8-tetrahydrofolate.

The protein belongs to the Fmt family.

It carries out the reaction L-methionyl-tRNA(fMet) + (6R)-10-formyltetrahydrofolate = N-formyl-L-methionyl-tRNA(fMet) + (6S)-5,6,7,8-tetrahydrofolate + H(+). Attaches a formyl group to the free amino group of methionyl-tRNA(fMet). The formyl group appears to play a dual role in the initiator identity of N-formylmethionyl-tRNA by promoting its recognition by IF2 and preventing the misappropriation of this tRNA by the elongation apparatus. In Pseudomonas putida (strain ATCC 47054 / DSM 6125 / CFBP 8728 / NCIMB 11950 / KT2440), this protein is Methionyl-tRNA formyltransferase.